Reading from the N-terminus, the 621-residue chain is MSFDTAKYPTLALVETPDELRLLPKESLPKLCDELRQYLLDSVSRSSGHFASGLGTVELTVALHYVYNTPFDHLVWDVGHQAYPHKILTGRRDRISTIRQKGGLHPFPWRDESEYDVLSVGHSSTSISAGLGMAVAAEREGKGRRTVCVIGDGAITAGMAFEAMNHAGDIKSDLLVVLNDNEMSISENVGALNNHLAQLLSGKLYASLREGGKKVLSGLPPIKELVKRTEEHLKGMVVPGTLFEELGFNYIGPVDGHDVQALSHTLKNMRSLKGPQLLHIMTKKGKGYAPAEQDPISWHAVPKFDPASGTLPKSKEGAQPTYSKIFGQWLQETAAKDSKLMAITPAMREGSGMLQFSRDYPQQYFDVAIAEQHAVTFAAGLAVGGYHPIVAIYSTFLQRAYDQVIHDVAIQSLPVLFAIDRGGIVGADGQTHQGAFDLSFLRCIPNMIIMTPSDENECRQMLHTGYHYQKGPTAVRYPRGNGTGTELTPLSELPIGKGVVRRQGKTVAILNFGTLLPEAQAVAEKLNATLVDMRFVKPLDEALLEELAQSHSTFVTLEENAVMGGAGSGVNEFLMAKRLAVSVLNIGLPDVFIPQGSQEEIRVDLGLDAAGIERRITQWME.

Residues His-80 and 121 to 123 contribute to the thiamine diphosphate site; that span reads GHS. Asp-152 lines the Mg(2+) pocket. Thiamine diphosphate is bound by residues 153-154, Asn-181, Tyr-288, and Glu-371; that span reads GA. Asn-181 lines the Mg(2+) pocket.

It belongs to the transketolase family. DXPS subfamily. As to quaternary structure, homodimer. Mg(2+) serves as cofactor. It depends on thiamine diphosphate as a cofactor.

It catalyses the reaction D-glyceraldehyde 3-phosphate + pyruvate + H(+) = 1-deoxy-D-xylulose 5-phosphate + CO2. The protein operates within metabolic intermediate biosynthesis; 1-deoxy-D-xylulose 5-phosphate biosynthesis; 1-deoxy-D-xylulose 5-phosphate from D-glyceraldehyde 3-phosphate and pyruvate: step 1/1. Functionally, catalyzes the acyloin condensation reaction between C atoms 2 and 3 of pyruvate and glyceraldehyde 3-phosphate to yield 1-deoxy-D-xylulose-5-phosphate (DXP). The protein is 1-deoxy-D-xylulose-5-phosphate synthase of Pectobacterium atrosepticum (strain SCRI 1043 / ATCC BAA-672) (Erwinia carotovora subsp. atroseptica).